The sequence spans 462 residues: Protein Tube (462 aa).

In terms of domain architecture, Death spans 27–152 (YSRNTELRRV…SAADFVALDF (126 aa)). The interval 218–265 (RDKSVPQPSGNTPPIAPPRRQQRSTTNSNFATLTGTGTTSTTIPNVPN) is disordered. The span at 249-259 (TLTGTGTTSTT) shows a compositional bias: low complexity. A run of 2 repeats spans residues 262–269 (NVPNLTIL) and 286–293 (NIPDLSIL). The segment at 262–460 (NVPNLTILNP…ACNIPDLSEL (199 aa)) is 5 X approximate repeats. A compositionally biased stretch (polar residues) spans 301-317 (RATVSDNPSNRTSSTDP). A disordered region spans residues 301 to 462 (RATVSDNPSN…NIPDLSELQQ (162 aa)). Copy 3 of the repeat occupies 319-326 (NIPRITLL). Low complexity predominate over residues 342-354 (AKASTATTSTASS). A compositionally biased stretch (polar residues) spans 355 to 367 (NNLPMISALNISK). Residues 356 to 363 (NLPMISAL) form repeat 4. Positions 368–377 (GSRETLRPES) are enriched in basic and acidic residues. The segment covering 387–403 (DDDDDNDGEEDGEEEYP) has biased composition (acidic residues). Low complexity predominate over residues 409–424 (NLSNSEQQSSNNDSSL). A compositionally biased stretch (polar residues) spans 425-438 (TTVTGTSGDNSFEL). Residues 439–449 (TNDSSSTSNDD) show a composition bias toward low complexity. Residues 453–460 (NIPDLSEL) form repeat 5.

In terms of assembly, interacts (via Death domain) with pll (via Death domain). In terms of processing, phosphorylated by pll.

The protein resides in the cytoplasm. Its subcellular location is the cell membrane. Its function is as follows. Plays an essential role in the Tl receptor signaling pathway that establishes embryonic dorsoventral polarity; the signal directs import of dl into ventral and ventrolateral nuclei, thereby establishing dorsoventral polarity. Tub recruits pll to the plasma membrane and protein-protein interaction activates pll. Also has a role in pupal pattern formation. The chain is Protein Tube (tub) from Drosophila melanogaster (Fruit fly).